Here is an 82-residue protein sequence, read N- to C-terminus: uncharacterized protein (82 aa).

2 helical membrane passes run 32–52 (PFSI…IGIL) and 59–79 (SKPL…FNII).

Its subcellular location is the cell membrane. This is an uncharacterized protein from Rickettsia prowazekii (strain Madrid E).